The chain runs to 287 residues: ATP synthase gamma chain (287 aa).

This sequence belongs to the ATPase gamma chain family. As to quaternary structure, F-type ATPases have 2 components, CF(1) - the catalytic core - and CF(0) - the membrane proton channel. CF(1) has five subunits: alpha(3), beta(3), gamma(1), delta(1), epsilon(1). CF(0) has three main subunits: a, b and c.

The protein localises to the cell membrane. Produces ATP from ADP in the presence of a proton gradient across the membrane. The gamma chain is believed to be important in regulating ATPase activity and the flow of protons through the CF(0) complex. The polypeptide is ATP synthase gamma chain (Brevibacillus brevis (strain 47 / JCM 6285 / NBRC 100599)).